We begin with the raw amino-acid sequence, 539 residues long: Chaperonin GroEL (539 aa).

ATP is bound by residues 30–33 (TLGP), Lys-51, 87–91 (DGTTT), Gly-415, 479–481 (NAA), and Asp-495.

This sequence belongs to the chaperonin (HSP60) family. Forms a cylinder of 14 subunits composed of two heptameric rings stacked back-to-back. Interacts with the co-chaperonin GroES.

It is found in the cytoplasm. The catalysed reaction is ATP + H2O + a folded polypeptide = ADP + phosphate + an unfolded polypeptide.. Functionally, together with its co-chaperonin GroES, plays an essential role in assisting protein folding. The GroEL-GroES system forms a nano-cage that allows encapsulation of the non-native substrate proteins and provides a physical environment optimized to promote and accelerate protein folding. The protein is Chaperonin GroEL of Enterobacter asburiae.